The sequence spans 548 residues: 5-epi-aristolochene synthase 2 (548 aa).

5 residues coordinate Mg(2+): aspartate 301, aspartate 305, aspartate 444, threonine 448, and glutamate 452. The DDXXD motif signature appears at 301–305; that stretch reads DDTFD.

Belongs to the terpene synthase family. Monomer. Requires Mg(2+) as cofactor. In terms of tissue distribution, expressed in roots, but not in shoots.

It is found in the cytoplasm. The enzyme catalyses (2E,6E)-farnesyl diphosphate = (+)-5-epi-aristolochene + diphosphate. Its pathway is secondary metabolite biosynthesis; terpenoid biosynthesis. Its function is as follows. Catalyzes the cyclization of trans,trans-farnesyl diphosphate (FPP) to the bicyclic intermediate 5-epi-aristolochene, initial step in the conversion of FPP to the sesquiterpenoid antifungal phytoalexin capsidiol. Produces germacrene A as an enzyme-bound intermediate that is not released by the enzyme, but is further cyclized to produce the bicyclic 5-epi-aristolochene. The chain is 5-epi-aristolochene synthase 2 from Nicotiana attenuata (Coyote tobacco).